Consider the following 399-residue polypeptide: CLOCK-interacting pacemaker (399 aa).

The segment covering 1 to 12 (MERKNSSRESPR) has biased composition (basic and acidic residues). Disordered stretches follow at residues 1–85 (MERK…AKNA) and 159–224 (SYTK…KLAE). At S213 the chain carries Phosphoserine. Residues 333–359 (TLKTKELIRQNQATQVELDQLKEQTQL) adopt a coiled-coil conformation. Residues 378-388 (SLTPGSSNTGS) show a composition bias toward polar residues. Residues 378–399 (SLTPGSSNTGSDLEAFSDHPDI) form a disordered region.

As to quaternary structure, interacts with CLOCK. Forms a ternary complex with the CLOCK-BMAL1 heterodimer. Interacts with CAD and HSPA5.

Its subcellular location is the nucleus. The protein localises to the cytoplasm. It localises to the cytosol. Transcriptional repressor which may act as a negative-feedback regulator of CLOCK-BMAL1 transcriptional activity in the circadian-clock mechanism. May stimulate BMAL1-dependent phosphorylation of CLOCK. However, the physiological relevance of these observations is unsure, since experiments in knockout mice showed that CIPC is not critially required for basic circadian clock. This chain is CLOCK-interacting pacemaker (CIPC), found in Pongo abelii (Sumatran orangutan).